The following is a 390-amino-acid chain: Lipoyl synthase, mitochondrial (390 aa).

A mitochondrion-targeting transit peptide spans 1 to 18 (MALYRAPKLQRSLLNRCL). [4Fe-4S] cluster is bound by residues Cys-99, Cys-104, Cys-110, Cys-137, Cys-141, Cys-144, and Ser-351. In terms of domain architecture, Radical SAM core spans 120-340 (AEGRSAATAT…KQVAEDLGFL (221 aa)).

This sequence belongs to the radical SAM superfamily. Lipoyl synthase family. The cofactor is [4Fe-4S] cluster.

Its subcellular location is the mitochondrion. It catalyses the reaction [[Fe-S] cluster scaffold protein carrying a second [4Fe-4S](2+) cluster] + N(6)-octanoyl-L-lysyl-[protein] + 2 oxidized [2Fe-2S]-[ferredoxin] + 2 S-adenosyl-L-methionine + 4 H(+) = [[Fe-S] cluster scaffold protein] + N(6)-[(R)-dihydrolipoyl]-L-lysyl-[protein] + 4 Fe(3+) + 2 hydrogen sulfide + 2 5'-deoxyadenosine + 2 L-methionine + 2 reduced [2Fe-2S]-[ferredoxin]. It functions in the pathway protein modification; protein lipoylation via endogenous pathway; protein N(6)-(lipoyl)lysine from octanoyl-[acyl-carrier-protein]: step 2/2. In terms of biological role, catalyzes the radical-mediated insertion of two sulfur atoms into the C-6 and C-8 positions of the octanoyl moiety bound to the lipoyl domains of lipoate-dependent enzymes, thereby converting the octanoylated domains into lipoylated derivatives. In Coprinopsis cinerea (strain Okayama-7 / 130 / ATCC MYA-4618 / FGSC 9003) (Inky cap fungus), this protein is Lipoyl synthase, mitochondrial.